The primary structure comprises 307 residues: Small ribosomal subunit biogenesis GTPase RsgA (307 aa).

The disordered stretch occupies residues methionine 1–asparagine 21. Residues glycine 10–asparagine 21 are compositionally biased toward polar residues. One can recognise a CP-type G domain in the interval arginine 85–phenylalanine 242. Residues asparagine 135–aspartate 138 and glycine 184–threonine 192 each bind GTP. Zn(2+)-binding residues include cysteine 266, cysteine 271, histidine 273, and cysteine 279.

It belongs to the TRAFAC class YlqF/YawG GTPase family. RsgA subfamily. As to quaternary structure, monomer. Associates with 30S ribosomal subunit, binds 16S rRNA. Requires Zn(2+) as cofactor.

Its subcellular location is the cytoplasm. Functionally, one of several proteins that assist in the late maturation steps of the functional core of the 30S ribosomal subunit. Helps release RbfA from mature subunits. May play a role in the assembly of ribosomal proteins into the subunit. Circularly permuted GTPase that catalyzes slow GTP hydrolysis, GTPase activity is stimulated by the 30S ribosomal subunit. The polypeptide is Small ribosomal subunit biogenesis GTPase RsgA (Neisseria gonorrhoeae (strain ATCC 700825 / FA 1090)).